The sequence spans 93 residues: UPF0358 protein YlaN (93 aa).

It belongs to the UPF0358 family.

Its function is as follows. Essential for cell growth and for normal cell shape. This Bacillus subtilis (strain 168) protein is UPF0358 protein YlaN (ylaN).